The chain runs to 221 residues: Small ribosomal subunit protein uS5 (221 aa).

Residues 46-109 (IKDEVIDIKR…INAKLNIMEI (64 aa)) form the S5 DRBM domain.

This sequence belongs to the universal ribosomal protein uS5 family. In terms of assembly, part of the 30S ribosomal subunit. Contacts protein S4.

Functionally, with S4 and S12 plays an important role in translational accuracy. The sequence is that of Small ribosomal subunit protein uS5 from Thermoplasma volcanium (strain ATCC 51530 / DSM 4299 / JCM 9571 / NBRC 15438 / GSS1).